Here is a 213-residue protein sequence, read N- to C-terminus: MRNKNTPIAAEGYPFVAIAGFITVVLALLAWKVLAAFFLVVTLFVVFFFRNPQRITPGDENAVVSPADGVVIYLGNARESHLDEEMMKISIFMSVFNVHINRVPVSGRVVDRFYLPGKFLDVRDERATFENEQNGLVLETARGVKMVVVQVAGLIARRIVCYPKIGDMLQRGQRYGLIRFGSRLDVYLPKNVELRVSMGDKTVAGETILGILP.

S182 serves as the catalytic Schiff-base intermediate with substrate; via pyruvic acid. At S182 the chain carries Pyruvic acid (Ser); by autocatalysis.

The protein belongs to the phosphatidylserine decarboxylase family. PSD-A subfamily. As to quaternary structure, heterodimer of a large membrane-associated beta subunit and a small pyruvoyl-containing alpha subunit. Pyruvate is required as a cofactor. Post-translationally, is synthesized initially as an inactive proenzyme. Formation of the active enzyme involves a self-maturation process in which the active site pyruvoyl group is generated from an internal serine residue via an autocatalytic post-translational modification. Two non-identical subunits are generated from the proenzyme in this reaction, and the pyruvate is formed at the N-terminus of the alpha chain, which is derived from the carboxyl end of the proenzyme. The post-translation cleavage follows an unusual pathway, termed non-hydrolytic serinolysis, in which the side chain hydroxyl group of the serine supplies its oxygen atom to form the C-terminus of the beta chain, while the remainder of the serine residue undergoes an oxidative deamination to produce ammonia and the pyruvoyl prosthetic group on the alpha chain.

The protein resides in the cell membrane. The enzyme catalyses a 1,2-diacyl-sn-glycero-3-phospho-L-serine + H(+) = a 1,2-diacyl-sn-glycero-3-phosphoethanolamine + CO2. It functions in the pathway phospholipid metabolism; phosphatidylethanolamine biosynthesis; phosphatidylethanolamine from CDP-diacylglycerol: step 2/2. Catalyzes the formation of phosphatidylethanolamine (PtdEtn) from phosphatidylserine (PtdSer). This is Phosphatidylserine decarboxylase proenzyme from Geotalea uraniireducens (strain Rf4) (Geobacter uraniireducens).